The primary structure comprises 428 residues: Elongation factor 1-alpha (428 aa).

Residues 5–215 (KPHVNIVFIG…ALDQIPEPPK (211 aa)) enclose the tr-type G domain. A G1 region spans residues 14–21 (GHVDHGKS). 14–21 (GHVDHGKS) is a binding site for GTP. Ser21 is a binding site for Mg(2+). The segment at 68-72 (GITID) is G2. Residues 89–92 (DAPG) form a G3 region. GTP-binding positions include 89–93 (DAPGH) and 144–147 (NKMD). The G4 stretch occupies residues 144 to 147 (NKMD). The segment at 181–183 (SAW) is G5.

The protein belongs to the TRAFAC class translation factor GTPase superfamily. Classic translation factor GTPase family. EF-Tu/EF-1A subfamily.

It localises to the cytoplasm. It carries out the reaction GTP + H2O = GDP + phosphate + H(+). GTP hydrolase that promotes the GTP-dependent binding of aminoacyl-tRNA to the A-site of ribosomes during protein biosynthesis. The chain is Elongation factor 1-alpha from Thermococcus gammatolerans (strain DSM 15229 / JCM 11827 / EJ3).